The primary structure comprises 726 residues: Catalase-peroxidase (726 aa).

Residues 1–33 are disordered; the sequence is MSTTDDTHNTLSTGKCPFHQGGHDRSAGAGTAS. The segment at residues 105–226 is a cross-link (tryptophyl-tyrosyl-methioninium (Trp-Tyr) (with M-252)); that stretch reads WHGAGTYRSI…LGATEMGLIY (122 aa). Catalysis depends on His106, which acts as the Proton acceptor. The tryptophyl-tyrosyl-methioninium (Tyr-Met) (with W-105) cross-link spans 226-252; that stretch reads YVNPEGPDHSGEPLSAAAAIRATFGNM. His267 contacts heme b.

This sequence belongs to the peroxidase family. Peroxidase/catalase subfamily. As to quaternary structure, homodimer or homotetramer. Heme b is required as a cofactor. Formation of the three residue Trp-Tyr-Met cross-link is important for the catalase, but not the peroxidase activity of the enzyme.

The enzyme catalyses H2O2 + AH2 = A + 2 H2O. The catalysed reaction is 2 H2O2 = O2 + 2 H2O. Functionally, bifunctional enzyme with both catalase and broad-spectrum peroxidase activity. The protein is Catalase-peroxidase of Salmonella choleraesuis (strain SC-B67).